The following is a 359-amino-acid chain: Aromatic amino acid aminotransferase (359 aa).

The segment covering 1-12 has biased composition (basic and acidic residues); it reads MSETSPKLRAEL. The tract at residues 1-21 is disordered; the sequence is MSETSPKLRAELEGIPTYKPG. At K223 the chain carries N6-(pyridoxal phosphate)lysine.

It belongs to the class-II pyridoxal-phosphate-dependent aminotransferase family. Homodimer. It depends on pyridoxal 5'-phosphate as a cofactor.

It catalyses the reaction an aromatic L-alpha-amino acid + 2-oxoglutarate = an aromatic oxo-acid + L-glutamate. Functionally, aminotransferase that catalyzes the conversion of aromatic amino acids and 2-oxoglutarate into corresponding aromatic oxo acids and L-glutamate. This Streptomyces coelicolor (strain ATCC BAA-471 / A3(2) / M145) protein is Aromatic amino acid aminotransferase.